A 422-amino-acid chain; its full sequence is Cytochrome P450-pinF1, plant-inducible (422 aa).

Cysteine 369 is a heme binding site.

Belongs to the cytochrome P450 family. The cofactor is heme.

Not essential for virulence, but may be involved in the detoxification of plant protective agents at the site of wounding. This Rhizobium radiobacter (Agrobacterium tumefaciens) protein is Cytochrome P450-pinF1, plant-inducible (cyp103).